The primary structure comprises 273 residues: Formamidopyrimidine-DNA glycosylase (273 aa).

Pro-2 acts as the Schiff-base intermediate with DNA in catalysis. Glu-3 serves as the catalytic Proton donor. Lys-58 acts as the Proton donor; for beta-elimination activity in catalysis. Residues His-92, Arg-111, and Lys-153 each coordinate DNA. The segment at 238–272 (KVYGREGQSCLSCSSTIIKIKHSGRSTFYCKTCQY) adopts an FPG-type zinc-finger fold. The Proton donor; for delta-elimination activity role is filled by Arg-262.

It belongs to the FPG family. Monomer. Zn(2+) is required as a cofactor.

The catalysed reaction is Hydrolysis of DNA containing ring-opened 7-methylguanine residues, releasing 2,6-diamino-4-hydroxy-5-(N-methyl)formamidopyrimidine.. It catalyses the reaction 2'-deoxyribonucleotide-(2'-deoxyribose 5'-phosphate)-2'-deoxyribonucleotide-DNA = a 3'-end 2'-deoxyribonucleotide-(2,3-dehydro-2,3-deoxyribose 5'-phosphate)-DNA + a 5'-end 5'-phospho-2'-deoxyribonucleoside-DNA + H(+). In terms of biological role, involved in base excision repair of DNA damaged by oxidation or by mutagenic agents. Acts as a DNA glycosylase that recognizes and removes damaged bases. Has a preference for oxidized purines, such as 7,8-dihydro-8-oxoguanine (8-oxoG). Has AP (apurinic/apyrimidinic) lyase activity and introduces nicks in the DNA strand. Cleaves the DNA backbone by beta-delta elimination to generate a single-strand break at the site of the removed base with both 3'- and 5'-phosphates. The sequence is that of Formamidopyrimidine-DNA glycosylase from Rickettsia peacockii (strain Rustic).